The sequence spans 196 residues: S-norcoclaurine synthase 2 (196 aa).

The signal sequence occupies residues 1–19 (MRMEVVLVVFLMFIGTINC). 104–106 (YRE) serves as a coordination point for dopamine. Lys118 serves as the catalytic Proton donor. A (4-hydroxyphenyl)acetaldehyde-binding site is contributed by Asp137.

This sequence belongs to the BetVI family.

It catalyses the reaction (4-hydroxyphenyl)acetaldehyde + dopamine = (S)-norcoclaurine + H2O. With respect to regulation, not inhibited by O-phenanthroline or EDTA. In terms of biological role, involved in the biosynthesis of the common precursor of all benzylisoquinoline alkaloids such as morphine, sanguinarine, codeine or berberine. Condenses dopamine and pyruvic acid or 4-hydroxyphenylpyruvate. This is S-norcoclaurine synthase 2 (PR10A) from Coptis japonica (Japanese goldthread).